A 356-amino-acid chain; its full sequence is Stomatin-like protein 2, mitochondrial (356 aa).

Residues 1 to 28 constitute a mitochondrion transit peptide; sequence MLARAARGTGALLLRGSLLASGRAPRRA. Serine 17 bears the Phosphoserine; by PKC/PRKCZ mark. Tyrosine 124 carries the phosphotyrosine modification. Lysine 145 carries the N6-acetyllysine; alternate modification. Residue lysine 145 is modified to N6-succinyllysine; alternate. Residues 215 to 252 adopt a coiled-coil conformation; it reads INVAEGKKQAQILASEAEKAEQINQAAGEASAVLAKAK. An N6-acetyllysine modification is found at lysine 233. The tract at residues 321 to 356 is disordered; sequence KAPVPGTPDSLSSGSSRDVQGTDASLDEELDRVKMS. Threonine 327 is subject to Phosphothreonine. Over residues 329 to 343 the composition is skewed to polar residues; the sequence is DSLSSGSSRDVQGTD. Position 330 is a phosphoserine (serine 330).

This sequence belongs to the band 7/mec-2 family. In terms of assembly, forms homooligomers. Interacts with MFN2; may form heterooligomers. Interacts with CACNA2D2. Interacts with PHB1 and PHB2; recruits them to cardiolipin-enriched mitochondrial membranes and stabilizes them. Post-translationally, hyperphosphorylated at Ser-17 in some patients with monoclonal gammopathy of undetermined significance (MGUS), multiple myeloma (MM) and Waldenstrom macroglobulinemia due to impaired dephosphorylation by PP2A. As to expression, ubiquitously expressed at low levels. Expressed in lymphoid tissues (at protein level).

It localises to the cell membrane. Its subcellular location is the mitochondrion. The protein localises to the mitochondrion inner membrane. It is found in the mitochondrion intermembrane space. The protein resides in the membrane raft. It localises to the cytoplasm. Its subcellular location is the cytoskeleton. Functionally, mitochondrial protein that probably regulates the biogenesis and the activity of mitochondria. Stimulates cardiolipin biosynthesis, binds cardiolipin-enriched membranes where it recruits and stabilizes some proteins including prohibitin and may therefore act in the organization of functional microdomains in mitochondrial membranes. Through regulation of the mitochondrial function may play a role into several biological processes including cell migration, cell proliferation, T-cell activation, calcium homeostasis and cellular response to stress. May play a role in calcium homeostasis through negative regulation of calcium efflux from mitochondria. Required for mitochondrial hyperfusion a pro-survival cellular response to stress which results in increased ATP production by mitochondria. May also regulate the organization of functional domains at the plasma membrane and play a role in T-cell activation through association with the T-cell receptor signaling complex and its regulation. The sequence is that of Stomatin-like protein 2, mitochondrial (STOML2) from Homo sapiens (Human).